A 255-amino-acid polypeptide reads, in one-letter code: MRKNNRKLDELRPIRIQRDFNIHAEGSCLVEFGNTRVICTASIAESVPPFLKGKNQGWITAEYSMLPRATATRNMRESVTGKIGGRTHEIQRMIGRAMRAVIDLTKIGERTIWIDCDVIQADGGTRTASIVGAFIAMTDAIIKLNEQKLINSVPIRDTVGAVSVGIVNDRLMLDLDFEEDSNAAVDMTIVATGNGEMVEIHSLGEEATYTRKEFEAMLDLGLESLKQIAELQNVFYEKMPSINLWKRKSVKEAKL.

Phosphate contacts are provided by residues arginine 86 and 124-126 (GTR).

This sequence belongs to the RNase PH family. As to quaternary structure, homohexameric ring arranged as a trimer of dimers.

It catalyses the reaction tRNA(n+1) + phosphate = tRNA(n) + a ribonucleoside 5'-diphosphate. Functionally, phosphorolytic 3'-5' exoribonuclease that plays an important role in tRNA 3'-end maturation. Removes nucleotide residues following the 3'-CCA terminus of tRNAs; can also add nucleotides to the ends of RNA molecules by using nucleoside diphosphates as substrates, but this may not be physiologically important. Probably plays a role in initiation of 16S rRNA degradation (leading to ribosome degradation) during starvation. This Hydrogenobaculum sp. (strain Y04AAS1) protein is Ribonuclease PH.